The chain runs to 162 residues: Ribosome maturation factor RimP (162 aa).

Belongs to the RimP family.

Its subcellular location is the cytoplasm. Required for maturation of 30S ribosomal subunits. This is Ribosome maturation factor RimP from Cupriavidus pinatubonensis (strain JMP 134 / LMG 1197) (Cupriavidus necator (strain JMP 134)).